Consider the following 253-residue polypeptide: uncharacterized protein (253 aa).

This is an uncharacterized protein from Acanthamoeba polyphaga mimivirus (APMV).